Consider the following 252-residue polypeptide: Fluoroquinolones export permease protein MT2760 (252 aa).

6 consecutive transmembrane segments (helical) span residues 31 to 51, 69 to 89, 119 to 139, 148 to 168, 176 to 196, and 224 to 244; these read VMLV…TPLF, LILT…LAAF, ATVM…SGIL, IPIG…ILAV, LAMV…PWFI, and TWWP…WVLF.

The complex is composed of 2 ATP-binding proteins and 2 transmembrane proteins.

The protein localises to the cell membrane. Its function is as follows. Part of the ABC transporter complex involved in fluoroquinolones export. Probably responsible for the translocation of the substrate across the membrane. The chain is Fluoroquinolones export permease protein MT2760 from Mycobacterium tuberculosis (strain CDC 1551 / Oshkosh).